Here is a 418-residue protein sequence, read N- to C-terminus: Zinc metalloproteinase nas-8 (418 aa).

Positions 1–28 (MMNRASLCRIAVLLCILHLSHLIDSTYA) are cleaved as a signal peptide. A propeptide spanning residues 29 to 100 (QSYLTEKDFL…TSKLKSGVRR (72 aa)) is cleaved from the precursor. Residues 101 to 296 (NGVTSVIKRW…LKINKLYNCP (196 aa)) enclose the Peptidase M12A domain. Intrachain disulfides connect cysteine 143–cysteine 295, cysteine 165–cysteine 184, cysteine 347–cysteine 381, cysteine 354–cysteine 374, and cysteine 361–cysteine 378. Histidine 192 serves as a coordination point for Zn(2+). The active site involves glutamate 193. Zn(2+) contacts are provided by histidine 196 and histidine 202. The region spanning 347-381 (CSDRTNLCWRWLDRCRSYFFEKIMKEFCALSCGYC) is the ShKT domain.

Zn(2+) serves as cofactor.

The protein resides in the secreted. It catalyses the reaction Hydrolysis of peptide bonds in substrates containing five or more amino acids, preferentially with Ala in P1', and Pro in P2'.. With respect to regulation, inhibited by ethylene glycol-bis(2-aminoethylether)-N,N,N,N-tetraacetic acid (EGTA), ethylenediaminetetraacetic acid (EDTA) and o-phenanthroline. In terms of biological role, metalloprotease. The chain is Zinc metalloproteinase nas-8 from Steinernema carpocapsae (Entomopathogenic nematode).